We begin with the raw amino-acid sequence, 123 residues long: ATP synthase epsilon chain (123 aa).

It belongs to the ATPase epsilon chain family. F-type ATPases have 2 components, CF(1) - the catalytic core - and CF(0) - the membrane proton channel. CF(1) has five subunits: alpha(3), beta(3), gamma(1), delta(1), epsilon(1). CF(0) has three main subunits: a, b and c.

It is found in the cell inner membrane. Functionally, produces ATP from ADP in the presence of a proton gradient across the membrane. The protein is ATP synthase epsilon chain of Helicobacter pylori (strain G27).